A 605-amino-acid chain; its full sequence is Progranulin (605 aa).

Positions 1–17 are cleaved as a signal peptide; the sequence is MWTLVGWTILVAGLVAG. 2 disulfide bridges follow: C126–C139 and C133–C149. N197 carries N-linked (GlcNAc...) asparagine glycosylation. Disulfide bonds link C297-C309, C303-C319, C310-C327, C320-C334, C328-C341, and C335-C348. Residues 359–386 form a disordered region; it reads QKTPAQPSRPSQPSPPGPPGPPSPPGPL. The span at 368 to 385 shows a compositional bias: pro residues; the sequence is PSQPSPPGPPGPPSPPGP. Disulfide bonds link C392–C404 and C398–C414.

Belongs to the granulin family. As to quaternary structure, progranulin is secreted as a homodimer. Interacts with SLPI; interaction protects progranulin from proteolysis. Interacts (via region corresponding to granulin-7 peptide) with CTSD; stabilizes CTSD and increases its proteolytic activity. Interacts (via region corresponding to granulin-7 peptide) with SORT1; this interaction mediates endocytosis and lysosome delivery of progranulin; interaction occurs at the neuronal cell surface in a stressed nervous system. Interacts with PSAP; facilitates lysosomal delivery of progranulin from the extracellular space and the biosynthetic pathway. Forms a complex with PSAP and M6PR; PSAP bridges the binding between progranulin and M6PR. Forms a complex with PSAP and SORT1; progranulin bridges the interaction between PSAP and SORT1; facilitates lysosomal targeting of PSAP via SORT1; interaction enhances PSAP uptake in primary cortical neurons. Interacts (via regions corresponding to granulin-2 and granulin-7 peptides) with GBA1; this interaction prevents aggregation of GBA1-SCARB2 complex via interaction with HSPA1A upon stress. Interacts (via region corresponding to granulin-7 peptide) with HSPA1A; mediates recruitment of HSPA1A to GBA1 and prevents GBA1 aggregation in response to stress. In terms of processing, cleaved by ELANE; proteolysis is blocked by SLPI and is concentration- and time-dependent and induces CXCL8/IL-8 production; granulin-3 and granulin-4 are resistant to ELANE. Cleaved by CTSL in lysosome thus regulating the maturation and turnover of progranulin within the lysosome.

The protein localises to the secreted. It localises to the lysosome. In terms of biological role, secreted protein that acts as a key regulator of lysosomal function and as a growth factor involved in inflammation, wound healing and cell proliferation. Regulates protein trafficking to lysosomes, and also the activity of lysosomal enzymes. Also facilitates the acidification of lysosomes, causing degradation of mature CTSD by CTSB. In addition, functions as a wound-related growth factor that acts directly on dermal fibroblasts and endothelial cells to promote division, migration and the formation of capillary-like tubule structures. Also promotes epithelial cell proliferation by blocking TNF-mediated neutrophil activation preventing release of oxidants and proteases. Moreover, modulates inflammation in neurons by preserving neurons survival, axonal outgrowth and neuronal integrity. Its function is as follows. Inhibits epithelial cell proliferation and induces epithelial cells to secrete IL-8. Functionally, stabilizes CTSD through interaction with CTSD leading to maintain its aspartic-type peptidase activity. This is Progranulin (GRN) from Cavia porcellus (Guinea pig).